The chain runs to 893 residues: Translation initiation factor IF-2 (893 aa).

Disordered stretches follow at residues 51-203 and 216-299; these read KEHG…AEAE and EENE…TSMQ. 3 stretches are compositionally biased toward basic and acidic residues: residues 102 to 203, 216 to 238, and 245 to 261; these read ALEE…AEAE, EENE…DADY, and HARE…EQQP. The 170-residue stretch at 392-561 folds into the tr-type G domain; that stretch reads GRAPVVTIMG…LLQSEVLELT (170 aa). The segment at 401-408 is G1; it reads GHVDHGKT. 401–408 contacts GTP; the sequence is GHVDHGKT. Residues 426-430 form a G2 region; that stretch reads GITQH. A G3 region spans residues 447–450; it reads DTPG. GTP contacts are provided by residues 447 to 451 and 501 to 504; these read DTPGH and NKID. The segment at 501-504 is G4; sequence NKID. The segment at 537 to 539 is G5; sequence SAK.

Belongs to the TRAFAC class translation factor GTPase superfamily. Classic translation factor GTPase family. IF-2 subfamily.

The protein localises to the cytoplasm. In terms of biological role, one of the essential components for the initiation of protein synthesis. Protects formylmethionyl-tRNA from spontaneous hydrolysis and promotes its binding to the 30S ribosomal subunits. Also involved in the hydrolysis of GTP during the formation of the 70S ribosomal complex. The sequence is that of Translation initiation factor IF-2 from Aliivibrio fischeri (strain ATCC 700601 / ES114) (Vibrio fischeri).